The primary structure comprises 62 residues: DNA-directed RNA polymerase subunit Rpo10 (62 aa).

Cys6, Cys9, Cys43, and Cys44 together coordinate Zn(2+).

Belongs to the archaeal Rpo10/eukaryotic RPB10 RNA polymerase subunit family. Part of the RNA polymerase complex. The cofactor is Zn(2+).

The protein resides in the cytoplasm. The enzyme catalyses RNA(n) + a ribonucleoside 5'-triphosphate = RNA(n+1) + diphosphate. In terms of biological role, DNA-dependent RNA polymerase (RNAP) catalyzes the transcription of DNA into RNA using the four ribonucleoside triphosphates as substrates. The sequence is that of DNA-directed RNA polymerase subunit Rpo10 from Methanosphaerula palustris (strain ATCC BAA-1556 / DSM 19958 / E1-9c).